The following is a 282-amino-acid chain: MEIIEKAPAKINLGLDIAGKYQDGFHELSMIMASVDLNDYLTITEIAEDKIVVESNNCKLPLNRKNDVYKAAHLLKRRYHISTGLKISLQKKIPICAGLGGGSSDAAATLRALNCLWKLNLSPKELIDVGFEIGSDVPYCIEAGCALISGKGEIVEPLATTLSTWVVLVKPDFGISTKTIFKEIDMATISRVDIPALKEALLANYYEDALQFMGNSLEDITIAKKPFIQKIKGRMIKCGADIALMTGSGPTVFALCRTEKRADRVVNSMKGFCKEVYKVRML.

Residue K10 is part of the active site. ATP is bound at residue 94–104 (PICAGLGGGSS). Residue D136 is part of the active site.

Belongs to the GHMP kinase family. IspE subfamily.

The catalysed reaction is 4-CDP-2-C-methyl-D-erythritol + ATP = 4-CDP-2-C-methyl-D-erythritol 2-phosphate + ADP + H(+). Functionally, catalyzes the phosphorylation of the position 2 hydroxy group of 4-diphosphocytidyl-2C-methyl-D-erythritol. In Streptococcus mutans serotype c (strain ATCC 700610 / UA159), this protein is Putative 4-diphosphocytidyl-2-C-methyl-D-erythritol kinase (ipk).